The sequence spans 461 residues: Adenosylmethionine-8-amino-7-oxononanoate aminotransferase (461 aa).

117–118 (GA) is a binding site for pyridoxal 5'-phosphate. Position 150 (Y150) interacts with substrate. D263 provides a ligand contact to pyridoxal 5'-phosphate. Positions 296, 331, and 426 each coordinate substrate. The residue at position 296 (K296) is an N6-(pyridoxal phosphate)lysine.

The protein belongs to the class-III pyridoxal-phosphate-dependent aminotransferase family. BioA subfamily. As to quaternary structure, homodimer. It depends on pyridoxal 5'-phosphate as a cofactor.

It is found in the cytoplasm. It catalyses the reaction (8S)-8-amino-7-oxononanoate + S-adenosyl-L-methionine = S-adenosyl-4-methylsulfanyl-2-oxobutanoate + (7R,8S)-7,8-diammoniononanoate. It functions in the pathway cofactor biosynthesis; biotin biosynthesis; 7,8-diaminononanoate from 8-amino-7-oxononanoate (SAM route): step 1/1. Functionally, catalyzes the transfer of the alpha-amino group from S-adenosyl-L-methionine (SAM) to 7-keto-8-aminopelargonic acid (KAPA) to form 7,8-diaminopelargonic acid (DAPA). It is the only aminotransferase known to utilize SAM as an amino donor. The chain is Adenosylmethionine-8-amino-7-oxononanoate aminotransferase from Methanocaldococcus jannaschii (strain ATCC 43067 / DSM 2661 / JAL-1 / JCM 10045 / NBRC 100440) (Methanococcus jannaschii).